We begin with the raw amino-acid sequence, 101 residues long: Small ribosomal subunit protein uS14 (101 aa).

This sequence belongs to the universal ribosomal protein uS14 family. As to quaternary structure, part of the 30S ribosomal subunit. Contacts proteins S3 and S10.

Its function is as follows. Binds 16S rRNA, required for the assembly of 30S particles and may also be responsible for determining the conformation of the 16S rRNA at the A site. The polypeptide is Small ribosomal subunit protein uS14 (Rhizobium johnstonii (strain DSM 114642 / LMG 32736 / 3841) (Rhizobium leguminosarum bv. viciae)).